Consider the following 440-residue polypeptide: MAHVIDFKEAGFDSVLDELEWRGLISQSTDRDRLAHTLNGEPVHYYCGFDPTAPSLHIGNLVQLIIMRHLQEAGHHPIALVGGATGLIGDPRQSGERILNPKDIVEQWCERLRIQIGGILEQEGSNPVTFVSNYDWTATMNVLDFLRDIGKNFRVGTMISKDIVARRLNSEEGISFTEFSYQVLQGNDYLYLYDHYDCVLELGGSDQWGNLTSGLDLIHKVRGVNVNVMASPIITDANGKKFGKSEGNAVWLDPNMLSVYKFYQFWLNRPDVEMASLLKAFTFLPKAEIERLVEATDTNPGAREAQRVLAWEVTSLVHGDEPTRKAIDASASLFGRGGDLADIDLETLESVLDGLKVENEAGEKVFAQALPGDRIAQAGVSAGLFKSISEARKTIKSGGVYVNNVRVEDEEQLLGDGDFLKGRFVVLRRGKKALGVVARS.

Tyr46 contacts L-tyrosine. The 'HIGH' region signature appears at 51–60 (PTAPSLHIGN). Tyr181 and Gln185 together coordinate L-tyrosine. The 'KMSKS' region motif lies at 241 to 245 (KFGKS). Position 244 (Lys244) interacts with ATP. Residues 373–430 (DRIAQAGVSAGLFKSISEARKTIKSGGVYVNNVRVEDEEQLLGDGDFLKGRFVVLRRG) enclose the S4 RNA-binding domain.

Belongs to the class-I aminoacyl-tRNA synthetase family. TyrS type 1 subfamily. In terms of assembly, homodimer.

The protein resides in the cytoplasm. The enzyme catalyses tRNA(Tyr) + L-tyrosine + ATP = L-tyrosyl-tRNA(Tyr) + AMP + diphosphate + H(+). Functionally, catalyzes the attachment of tyrosine to tRNA(Tyr) in a two-step reaction: tyrosine is first activated by ATP to form Tyr-AMP and then transferred to the acceptor end of tRNA(Tyr). This is Tyrosine--tRNA ligase from Bifidobacterium animalis subsp. lactis (strain AD011).